The sequence spans 251 residues: B3 domain-containing protein REM7 (251 aa).

2 consecutive DNA-binding regions (TF-B3) follow at residues 11-103 (NSHF…LGPS) and 170-251 (CFVA…SRLN).

It localises to the nucleus. This is B3 domain-containing protein REM7 (REM7) from Arabidopsis thaliana (Mouse-ear cress).